We begin with the raw amino-acid sequence, 127 residues long: Putative iron-sulfur cluster insertion protein ErpA (127 aa).

Over residues 1–14 (MNTPFNDGSGQTDP) the composition is skewed to polar residues. The tract at residues 1–20 (MNTPFNDGSGQTDPMTDIPT) is disordered. Iron-sulfur cluster-binding residues include Cys55, Cys119, and Cys121.

Belongs to the HesB/IscA family. Homodimer. Iron-sulfur cluster serves as cofactor.

Functionally, required for insertion of 4Fe-4S clusters. The polypeptide is Putative iron-sulfur cluster insertion protein ErpA (Nitrosospira multiformis (strain ATCC 25196 / NCIMB 11849 / C 71)).